Here is a 271-residue protein sequence, read N- to C-terminus: uncharacterized protein (271 aa).

2 disordered regions span residues 50-93 (KKKT…SSSL) and 128-233 (KNNY…RKKV). Low complexity-rich tracts occupy residues 61–93 (SPTKPLSTSIPTTTTAATSQSITSTSLSSSSSL) and 129–165 (NNYNNYNNNNNNNNNNNNNNNNNNNNNNNNNNNNNNN). Residues 169-179 (TDKKEGEKNEN) show a composition bias toward basic and acidic residues. Composition is skewed to acidic residues over residues 180-199 (ENENENENENENENENDIIE) and 207-217 (MDEELENEQVE).

This is an uncharacterized protein from Dictyostelium discoideum (Social amoeba).